A 447-amino-acid polypeptide reads, in one-letter code: Putative branched-chain amino acid carrier protein SAB1263c (447 aa).

Transmembrane regions (helical) follow at residues 6–26 (WVIG…IFPP), 40–60 (ILAF…VGAL), 74–94 (PKFS…LFAI), 114–134 (SSIA…YICL), 143–163 (IGSL…IKGY), 193–213 (GYLT…VNAV), 229–249 (LTAG…LGYI), 290–310 (LLGI…IGAV), 326–346 (FVLV…NAVI), 350–370 (IPVL…ILIA), 382–402 (IPVI…LGWL), and 417–437 (LEWF…GIFV).

Belongs to the branched chain amino acid transporter family.

Its subcellular location is the cell membrane. Component of the transport system for branched-chain amino acids (leucine, isoleucine and valine), which is coupled to a proton motive force (Potential). Contributes to NaCl tolerance. The sequence is that of Putative branched-chain amino acid carrier protein SAB1263c from Staphylococcus aureus (strain bovine RF122 / ET3-1).